The following is a 332-amino-acid chain: MKAIEWRNNRLIILDQTLLPLEEKYLELNDYHAVAEAIKTLRVRGAPSIGVAAAYGIAFGALSIETRYCSEFLPLYQQISAEIASTRPTAKNLFMAVERMDHVVASGTDVLQVKISLVDEAVKIHREEEEASRKISTFGADLIQPGWTVLTHCNAGPLATAGYGTALGVIIAAHQQNKGISAFATETRPLLQGARLTALELKEAGVPFKLITDSMAGHFMKKGVINAVVVGADRIARNGDTANKIGTYSLAVLALAHGIPFYVAAPSSTFDKSIESGNDIVIEERKPEEITYLRGQRIAPENIDVANPAFDVTPANLIAAFITENGIIRRGE.

Substrate-binding positions include arginine 44–alanine 46, arginine 87, and glutamine 192. Residue aspartate 233 is the Proton donor of the active site. Position 243 to 244 (asparagine 243 to lysine 244) interacts with substrate.

This sequence belongs to the eIF-2B alpha/beta/delta subunits family. MtnA subfamily.

It carries out the reaction 5-(methylsulfanyl)-alpha-D-ribose 1-phosphate = 5-(methylsulfanyl)-D-ribulose 1-phosphate. It participates in amino-acid biosynthesis; L-methionine biosynthesis via salvage pathway; L-methionine from S-methyl-5-thio-alpha-D-ribose 1-phosphate: step 1/6. Its function is as follows. Catalyzes the interconversion of methylthioribose-1-phosphate (MTR-1-P) into methylthioribulose-1-phosphate (MTRu-1-P). This chain is Methylthioribose-1-phosphate isomerase, found in Dehalococcoides mccartyi (strain ATCC BAA-2100 / JCM 16839 / KCTC 5957 / BAV1).